Consider the following 423-residue polypeptide: Diels-Alderase cheD (423 aa).

The first 18 residues, 1–18 (MKLCALFAGAVISTSAVA), serve as a signal peptide directing secretion. Asn-84 and Asn-132 each carry an N-linked (GlcNAc...) asparagine glycan.

The protein belongs to the Diels-Alderase family.

It functions in the pathway secondary metabolite biosynthesis. Diels-Alderase; part of the gene cluster that mediates the biosynthesis of chaetoglobosin A which has a unique inhibitory activity against actin polymerization in mammalian cells. Chaetoglobosin A and its intermediates are involved in the morphological differentiation of C.globosum. The first step of the pathway is the synthesis of prochaetoglobosin I via condensation of one acetyl-CoA, 8 malonyl-CoA, and a L-tryptophan molecule by the PKS-NRPS hybrid synthetase cheA, followed by reduction of backbone double bond to install desired geometry by the enoyl reductase cheB. Further multiple oxidation steps performed by the cytochrome P450 monooxygenases cheE and cheG, as well as by the FAD-linked oxidoreductase cheF, lead to the formation of chaetoglobosin A. Depending on the order of action of these reductases, distinct intermediates can be identified. Within the pathway, the cytochrome P450 monooxygenase cheE catalyzes a stereospecific epoxidation on prochaetoglobosin I, cytoglobosin D, and chaetoglobosin J intermediates. The FAD-linked oxidoreductase cheF performs dehydrogenation of the C-20 hydroxyl groups in the 20-dihyrochaetoglobosin A and cytoglobosin D intermediates. Finally, the cytochrome P450 monooxygenase cheG can catalyze the stereospecific dihydroxylation of prochaetoglobosin I and prochaetoglobosin IV at C-19 and C-20, respectively. The Diels-Alderase cheD may play a role in the post-PKS-NRPS biosynthetic steps catalyzing Diels-Alder cyclization. The protein is Diels-Alderase cheD of Chaetomium globosum (strain ATCC 6205 / CBS 148.51 / DSM 1962 / NBRC 6347 / NRRL 1970) (Soil fungus).